The chain runs to 262 residues: Indole-3-glycerol phosphate synthase (262 aa).

The protein belongs to the TrpC family.

The catalysed reaction is 1-(2-carboxyphenylamino)-1-deoxy-D-ribulose 5-phosphate + H(+) = (1S,2R)-1-C-(indol-3-yl)glycerol 3-phosphate + CO2 + H2O. It functions in the pathway amino-acid biosynthesis; L-tryptophan biosynthesis; L-tryptophan from chorismate: step 4/5. This Bordetella petrii (strain ATCC BAA-461 / DSM 12804 / CCUG 43448) protein is Indole-3-glycerol phosphate synthase.